Reading from the N-terminus, the 129-residue chain is ALK and LTK ligand 1 (129 aa).

Residues 1-27 (MRPLKPGAPLPALFLLALALSPHGAHG) form the signal peptide. The interval 24–63 (GAHGRPRGRRGARVTDKEPKPLLFLPAAGAGRTPSGSRSA) is disordered. The segment covering 25–35 (AHGRPRGRRGA) has biased composition (basic residues). Cystine bridges form between Cys90/Cys126 and Cys104/Cys113.

The protein belongs to the ALKAL family. In terms of tissue distribution, widely expressed with highest levels in thyroid and moderate levels in stomach, trachea, small intestine, prostate and brain.

It is found in the secreted. The protein localises to the cell membrane. Functionally, cytokine that acts as a physiological ligand for receptor tyrosine kinase LTK, leading to its activation. Monomeric ALKAL1 binds to LTK, leading to LTK homodimerization and activation. In contrast to ALKAL2, does not act as a potent physiological ligand for ALK. The polypeptide is ALK and LTK ligand 1 (Homo sapiens (Human)).